The chain runs to 217 residues: Small ribosomal subunit protein uS3c (217 aa).

The region spanning 47 to 119 is the KH type-2 domain; sequence VRTHIKSSSN…KLHIAIEKVA (73 aa).

It belongs to the universal ribosomal protein uS3 family. As to quaternary structure, part of the 30S ribosomal subunit.

The protein resides in the plastid. The protein localises to the chloroplast. This is Small ribosomal subunit protein uS3c (rps3) from Pinus koraiensis (Korean pine).